The following is a 370-amino-acid chain: Spermidine/putrescine import ATP-binding protein PotA (370 aa).

Positions I6–I236 constitute an ABC transporter domain. G38–T45 contributes to the ATP binding site.

The protein belongs to the ABC transporter superfamily. Spermidine/putrescine importer (TC 3.A.1.11.1) family. The complex is composed of two ATP-binding proteins (PotA), two transmembrane proteins (PotB and PotC) and a solute-binding protein (PotD).

The protein localises to the cell membrane. It carries out the reaction ATP + H2O + polyamine-[polyamine-binding protein]Side 1 = ADP + phosphate + polyamineSide 2 + [polyamine-binding protein]Side 1.. Functionally, part of the ABC transporter complex PotABCD involved in spermidine/putrescine import. Responsible for energy coupling to the transport system. The protein is Spermidine/putrescine import ATP-binding protein PotA of Levilactobacillus brevis (strain ATCC 367 / BCRC 12310 / CIP 105137 / JCM 1170 / LMG 11437 / NCIMB 947 / NCTC 947) (Lactobacillus brevis).